The following is a 227-amino-acid chain: Probable GTP-binding protein EngB (227 aa).

The 190-residue stretch at 30–219 (KKPQIIVVGR…MVKINKNVNE (190 aa)) folds into the EngB-type G domain. Residues 38-45 (GRSNVGKS), 63-67 (GVTLK), 80-83 (DLPG), 160-163 (NKMD), and 197-199 (IGI) each bind GTP. Positions 45 and 65 each coordinate Mg(2+).

The protein belongs to the TRAFAC class TrmE-Era-EngA-EngB-Septin-like GTPase superfamily. EngB GTPase family. Mg(2+) is required as a cofactor.

Functionally, necessary for normal cell division and for the maintenance of normal septation. The protein is Probable GTP-binding protein EngB of Methanococcus aeolicus (strain ATCC BAA-1280 / DSM 17508 / OCM 812 / Nankai-3).